A 749-amino-acid polypeptide reads, in one-letter code: Phosphate-regulating neutral endopeptidase PHEX (749 aa).

The Cytoplasmic portion of the chain corresponds to 1–20 (MEAETGSTMETGKGTNRGIR). Residues 21–37 (IALALFIGGTLVLGTLL) traverse the membrane as a helical; Signal-anchor for type II membrane protein segment. The Extracellular portion of the chain corresponds to 38–749 (FLVSQGLLSF…NRGADSCRLW (712 aa)). Residues 53–749 (YCLKPECIEA…NRGADSCRLW (697 aa)) enclose the Peptidase M13 domain. An intrachain disulfide couples C54 to C59. Residues N71, N238, N263, N290, N301, N377, and N484 are each glycosylated (N-linked (GlcNAc...) asparagine). 4 disulfides stabilise this stretch: C77/C733, C85/C693, C142/C406, and C617/C746. H580 contributes to the Zn(2+) binding site. The active site involves E581. H584 and E642 together coordinate Zn(2+). The Proton donor role is filled by D646. Residue N736 is glycosylated (N-linked (GlcNAc...) asparagine).

The protein belongs to the peptidase M13 family. As to quaternary structure, interacts with MEPE; the interaction is zinc-dependent (via ASARM motif). Zn(2+) is required as a cofactor. N-glycosylated. Expressed in bone, specifically in the osteoid and in osteocytes. Expressed in teeth, specifically in odontoblasts and ameloblasts. Expressed moderately by macrophages in the liver and has minimal expression in brown adipose tissue. Also expressed in suprabasal layers of the skin.

It is found in the cell membrane. In terms of biological role, peptidase that cleaves SIBLING (small integrin-binding ligand, N-linked glycoprotein)-derived ASARM peptides, thus regulating their biological activity. Cleaves ASARM peptides between Ser and Glu or Asp residues. Regulates osteogenic cell differentiation and bone mineralization through the cleavage of the MEPE-derived ASARM peptide. Promotes dentin mineralization and renal phosphate reabsorption by cleaving DMP1- and MEPE-derived ASARM peptides. Inhibits the cleavage of MEPE by CTSB/cathepsin B thus preventing MEPE degradation. In Mus musculus (Mouse), this protein is Phosphate-regulating neutral endopeptidase PHEX (Phex).